Reading from the N-terminus, the 59-residue chain is Small EDRK-rich factor 2 (59 aa).

2 stretches are compositionally biased toward basic and acidic residues: residues 1–30 (MTRG…RDDG) and 50–59 (KANEKKEEPK). A disordered region spans residues 1–59 (MTRGNQRELARQKNMKKQSDSVKGKRRDDGLSAAARKQRDSEIMQQKQKKANEKKEEPK).

The protein belongs to the SERF family.

Functionally, positive regulator of amyloid protein aggregation and proteotoxicity. Induces conformational changes in amyloid proteins, such as HTT, driving them into compact formations preceding the formation of aggregates. The polypeptide is Small EDRK-rich factor 2 (SERF2) (Plecturocebus moloch (Dusky titi monkey)).